The sequence spans 201 residues: Large ribosomal subunit protein uL4 (201 aa).

The segment at A39–R67 is disordered.

This sequence belongs to the universal ribosomal protein uL4 family. Part of the 50S ribosomal subunit.

Functionally, one of the primary rRNA binding proteins, this protein initially binds near the 5'-end of the 23S rRNA. It is important during the early stages of 50S assembly. It makes multiple contacts with different domains of the 23S rRNA in the assembled 50S subunit and ribosome. Forms part of the polypeptide exit tunnel. The polypeptide is Large ribosomal subunit protein uL4 (Marinomonas sp. (strain MWYL1)).